We begin with the raw amino-acid sequence, 149 residues long: MQVILLDKIGNLGSLGDTVNVKSGYARNFLIPQGKAVMATKGNVEMFEARRAELEAKVAEQLASAEARAEKVNALEAVVIASKAGDEGKLFGSIGTRDIADAITAAGVEVVKSEVRLPEGALRTTGEFEISVQLHSEVFATVKLQVVAE.

This sequence belongs to the bacterial ribosomal protein bL9 family.

In terms of biological role, binds to the 23S rRNA. The sequence is that of Large ribosomal subunit protein bL9 from Vibrio vulnificus (strain CMCP6).